A 393-amino-acid chain; its full sequence is Histidinol dehydrogenase (393 aa).

NAD(+) is bound by residues Tyr112, Gln171, and Asn194. Residues Thr217, Gln239, and His242 each coordinate substrate. Residues Gln239 and His242 each contribute to the Zn(2+) site. Catalysis depends on proton acceptor residues Glu293 and His294. Residues His294, Asp326, Glu379, and His384 each contribute to the substrate site. Asp326 provides a ligand contact to Zn(2+). Residue His384 participates in Zn(2+) binding.

Belongs to the histidinol dehydrogenase family. The cofactor is Zn(2+).

The enzyme catalyses L-histidinol + 2 NAD(+) + H2O = L-histidine + 2 NADH + 3 H(+). It participates in amino-acid biosynthesis; L-histidine biosynthesis; L-histidine from 5-phospho-alpha-D-ribose 1-diphosphate: step 9/9. Functionally, catalyzes the sequential NAD-dependent oxidations of L-histidinol to L-histidinaldehyde and then to L-histidine. The polypeptide is Histidinol dehydrogenase (Sulfolobus acidocaldarius (strain ATCC 33909 / DSM 639 / JCM 8929 / NBRC 15157 / NCIMB 11770)).